We begin with the raw amino-acid sequence, 196 residues long: DnaA initiator-associating protein DiaA (196 aa).

Positions 34–196 (LVQSLLNGNK…DNTLFPHQAD (163 aa)) constitute an SIS domain.

Belongs to the SIS family. DiaA subfamily. As to quaternary structure, homotetramer; dimer of dimers.

Required for the timely initiation of chromosomal replication via direct interactions with the DnaA initiator protein. This is DnaA initiator-associating protein DiaA from Edwardsiella ictaluri (strain 93-146).